A 244-amino-acid polypeptide reads, in one-letter code: Protein pendolino (244 aa).

The region spanning 20-176 (QQEYKILAEY…VQENIKESKE (157 aa)) is the UBC core domain.

The protein belongs to the ubiquitin-conjugating enzyme family. FTS subfamily. Interacts (via N-terminus) with cav/HOAP (via N-terminus); the interaction is direct. Probably interacts (via N-terminus and UBC domain) with ver and moi.

The protein resides in the nucleus. Its subcellular location is the nucleolus. It is found in the chromosome. In terms of biological role, required for efficient DNA replication, probably through involvement in telomere replication. May have a role in telomere capping of heterochromatic chromosome ends. In Drosophila melanogaster (Fruit fly), this protein is Protein pendolino.